The following is a 171-amino-acid chain: 3-hydroxydecanoyl-[acyl-carrier-protein] dehydratase (171 aa).

His70 is a catalytic residue.

This sequence belongs to the thioester dehydratase family. FabA subfamily. In terms of assembly, homodimer.

It is found in the cytoplasm. It catalyses the reaction a (3R)-hydroxyacyl-[ACP] = a (2E)-enoyl-[ACP] + H2O. The catalysed reaction is (3R)-hydroxydecanoyl-[ACP] = (2E)-decenoyl-[ACP] + H2O. The enzyme catalyses (2E)-decenoyl-[ACP] = (3Z)-decenoyl-[ACP]. It participates in lipid metabolism; fatty acid biosynthesis. Necessary for the introduction of cis unsaturation into fatty acids. Catalyzes the dehydration of (3R)-3-hydroxydecanoyl-ACP to E-(2)-decenoyl-ACP and then its isomerization to Z-(3)-decenoyl-ACP. Can catalyze the dehydratase reaction for beta-hydroxyacyl-ACPs with saturated chain lengths up to 16:0, being most active on intermediate chain length. In Shewanella pealeana (strain ATCC 700345 / ANG-SQ1), this protein is 3-hydroxydecanoyl-[acyl-carrier-protein] dehydratase.